Here is a 204-residue protein sequence, read N- to C-terminus: Putative glutathione S-transferase alpha-3 (204 aa).

N-acetylthreonine is present on Thr-2. One can recognise a GST N-terminal domain in the interval 2–79; the sequence is TKPQLSYFKV…YIASQHDFVG (78 aa). Residues Tyr-8, 49–50, and 63–64 contribute to the glutathione site; these read QL and QS. Residues 81-202 form the GST C-terminal domain; that stretch reads TPEEKALVDE…YLKNRPITER (122 aa).

The protein belongs to the GST superfamily. Alpha family.

It carries out the reaction RX + glutathione = an S-substituted glutathione + a halide anion + H(+). Functionally, conjugation of reduced glutathione to a wide number of exogenous and endogenous hydrophobic electrophiles. The polypeptide is Putative glutathione S-transferase alpha-3 (gsta3) (Dictyostelium discoideum (Social amoeba)).